The sequence spans 120 residues: NAD(P)H-quinone oxidoreductase subunit 3, chloroplastic (120 aa).

The next 3 helical transmembrane spans lie at 14 to 34 (LIIS…LAPI), 64 to 84 (MFAL…PWAM), and 88 to 108 (ILGV…IVGL).

The protein belongs to the complex I subunit 3 family. NDH is composed of at least 16 different subunits, 5 of which are encoded in the nucleus.

Its subcellular location is the plastid. It is found in the chloroplast thylakoid membrane. The enzyme catalyses a plastoquinone + NADH + (n+1) H(+)(in) = a plastoquinol + NAD(+) + n H(+)(out). The catalysed reaction is a plastoquinone + NADPH + (n+1) H(+)(in) = a plastoquinol + NADP(+) + n H(+)(out). Its function is as follows. NDH shuttles electrons from NAD(P)H:plastoquinone, via FMN and iron-sulfur (Fe-S) centers, to quinones in the photosynthetic chain and possibly in a chloroplast respiratory chain. The immediate electron acceptor for the enzyme in this species is believed to be plastoquinone. Couples the redox reaction to proton translocation, and thus conserves the redox energy in a proton gradient. The chain is NAD(P)H-quinone oxidoreductase subunit 3, chloroplastic from Coffea arabica (Arabian coffee).